The chain runs to 160 residues: MRCPSCNSLDTQVKDSRPTEDSAVIRRRRVCMACNFRFTTFERVQLRELTVIKRNGRRVPFDRDKLVRSLQISLRKRPVEPERIETMVSAIVRELESGGEAEISSETIGEIVMEHLRSLDDVAYVRFASVYRNFREAKDFEAVLGELSSEDDPRRVPLRK.

Polar residues predominate over residues 1-11; the sequence is MRCPSCNSLDT. Positions 1 to 20 are disordered; sequence MRCPSCNSLDTQVKDSRPTE. A zinc finger spans residues 3-34; the sequence is CPSCNSLDTQVKDSRPTEDSAVIRRRRVCMAC. The ATP-cone domain occupies 49–139; sequence LTVIKRNGRR…VYRNFREAKD (91 aa).

This sequence belongs to the NrdR family. Requires Zn(2+) as cofactor.

Negatively regulates transcription of bacterial ribonucleotide reductase nrd genes and operons by binding to NrdR-boxes. The protein is Transcriptional repressor NrdR of Nitrobacter winogradskyi (strain ATCC 25391 / DSM 10237 / CIP 104748 / NCIMB 11846 / Nb-255).